The sequence spans 179 residues: ATP synthase subunit delta (179 aa).

This sequence belongs to the ATPase delta chain family. As to quaternary structure, F-type ATPases have 2 components, F(1) - the catalytic core - and F(0) - the membrane proton channel. F(1) has five subunits: alpha(3), beta(3), gamma(1), delta(1), epsilon(1). F(0) has three main subunits: a(1), b(2) and c(10-14). The alpha and beta chains form an alternating ring which encloses part of the gamma chain. F(1) is attached to F(0) by a central stalk formed by the gamma and epsilon chains, while a peripheral stalk is formed by the delta and b chains.

The protein localises to the cell membrane. In terms of biological role, f(1)F(0) ATP synthase produces ATP from ADP in the presence of a proton or sodium gradient. F-type ATPases consist of two structural domains, F(1) containing the extramembraneous catalytic core and F(0) containing the membrane proton channel, linked together by a central stalk and a peripheral stalk. During catalysis, ATP synthesis in the catalytic domain of F(1) is coupled via a rotary mechanism of the central stalk subunits to proton translocation. This protein is part of the stalk that links CF(0) to CF(1). It either transmits conformational changes from CF(0) to CF(1) or is implicated in proton conduction. The protein is ATP synthase subunit delta of Clostridium botulinum (strain Alaska E43 / Type E3).